We begin with the raw amino-acid sequence, 592 residues long: Putative esterase (592 aa).

Residues 12–32 form a helical membrane-spanning segment; that stretch reads LTLIAYLSVLMGVSVYFYVLI. Residues Asn68, Asn83, Asn95, Asn447, and Asn510 are each glycosylated (N-linked (GlcNAc...) asparagine; by host). The active-site Charge relay system is the His513. The N-linked (GlcNAc...) asparagine; by host glycan is linked to Asn528.

It belongs to the type-B carboxylesterase/lipase family.

The protein resides in the membrane. It catalyses the reaction a carboxylic ester + H2O = an alcohol + a carboxylate + H(+). The chain is Putative esterase from Spodoptera frugiperda (Fall armyworm).